Here is a 429-residue protein sequence, read N- to C-terminus: Glutamate-1-semialdehyde 2,1-aminomutase 1 (429 aa).

Lysine 268 carries the N6-(pyridoxal phosphate)lysine modification.

This sequence belongs to the class-III pyridoxal-phosphate-dependent aminotransferase family. HemL subfamily. In terms of assembly, homodimer. Requires pyridoxal 5'-phosphate as cofactor.

The protein resides in the cytoplasm. It carries out the reaction (S)-4-amino-5-oxopentanoate = 5-aminolevulinate. It participates in porphyrin-containing compound metabolism; protoporphyrin-IX biosynthesis; 5-aminolevulinate from L-glutamyl-tRNA(Glu): step 2/2. This is Glutamate-1-semialdehyde 2,1-aminomutase 1 from Staphylococcus saprophyticus subsp. saprophyticus (strain ATCC 15305 / DSM 20229 / NCIMB 8711 / NCTC 7292 / S-41).